Here is a 252-residue protein sequence, read N- to C-terminus: Triosephosphate isomerase (252 aa).

10–12 (NWK) is a substrate binding site. The active-site Electrophile is H96. E168 serves as the catalytic Proton acceptor. Residues G174, S214, and 235–236 (GG) each bind substrate.

The protein belongs to the triosephosphate isomerase family. Homodimer.

The protein resides in the cytoplasm. It catalyses the reaction D-glyceraldehyde 3-phosphate = dihydroxyacetone phosphate. It functions in the pathway carbohydrate biosynthesis; gluconeogenesis. It participates in carbohydrate degradation; glycolysis; D-glyceraldehyde 3-phosphate from glycerone phosphate: step 1/1. Involved in the gluconeogenesis. Catalyzes stereospecifically the conversion of dihydroxyacetone phosphate (DHAP) to D-glyceraldehyde-3-phosphate (G3P). In Streptococcus thermophilus (strain CNRZ 1066), this protein is Triosephosphate isomerase.